A 116-amino-acid polypeptide reads, in one-letter code: Flagellar transcriptional regulator FlhD (116 aa).

The protein belongs to the FlhD family. Homodimer; disulfide-linked. Forms a heterohexamer composed of two FlhC and four FlhD subunits. Each FlhC binds a FlhD dimer, forming a heterotrimer, and a hexamer assembles by dimerization of two heterotrimers.

It is found in the cytoplasm. Functions in complex with FlhC as a master transcriptional regulator that regulates transcription of several flagellar and non-flagellar operons by binding to their promoter region. Activates expression of class 2 flagellar genes, including fliA, which is a flagellum-specific sigma factor that turns on the class 3 genes. Also regulates genes whose products function in a variety of physiological pathways. The sequence is that of Flagellar transcriptional regulator FlhD from Salmonella arizonae (strain ATCC BAA-731 / CDC346-86 / RSK2980).